A 469-amino-acid chain; its full sequence is Zinc transporter SLC39A7 (469 aa).

The helical transmembrane segment at 10 to 30 (WVAVGLLTWATLGLLVAGLGG) threads the bilayer. Basic and acidic residues-rich tracts occupy residues 42 to 56 (FHGH…DFHH) and 66 to 114 (HTHE…EHSH). The tract at residues 42–121 (FHGHSHRHSH…HSHGGYGESG (80 aa)) is disordered. Histidine 66 carries the pros-methylhistidine modification. 3 helical membrane-spanning segments follow: residues 138–158 (ALGA…LIPV), 169–189 (LQIL…LHLI), and 214–234 (GPIL…LVVE). Residues 242–263 (GGHGHSHGHGHAHSHTRGSHGH) are compositionally biased toward basic residues. The disordered stretch occupies residues 242–310 (GGHGHSHGHG…VRPQNAEEEK (69 aa)). The segment covering 264-285 (GRQERSTKEKQSSEEEEKETRG) has biased composition (basic and acidic residues). A phosphoserine; by CK2 mark is found at serine 275 and serine 276. A run of 2 helical transmembrane segments spans residues 381–401 (MRLQ…ALLT) and 417–436 (GWVL…VSVL).

This sequence belongs to the ZIP transporter (TC 2.A.5) family. KE4/Catsup subfamily. As to quaternary structure, homodimer. In terms of processing, rapidly phosphorylated by CK2 following Zn(2+) treatment. This phosphorylation is required for efficient cytosolic Zn(2+) release. Post-translationally, methylation at some His residue by METTL9 leads to reduced zinc-binding. As to expression, widely expressed.

It is found in the endoplasmic reticulum membrane. Its subcellular location is the golgi apparatus. The protein localises to the cis-Golgi network membrane. It catalyses the reaction Zn(2+)(in) = Zn(2+)(out). With respect to regulation, phosphorylation activates zinc transport activity. Its function is as follows. Transports Zn(2+) from the endoplasmic reticulum (ER)/Golgi apparatus to the cytosol, playing an essential role in the regulation of cytosolic zinc levels. Acts as a gatekeeper of zinc release from intracellular stores, requiring post-translational activation by phosphorylation, resulting in activation of multiple downstream pathways leading to cell growth and proliferation. Has an essential role in B cell development and is required for proper B cell receptor signaling. Plays an important role in maintaining intestinal epithelial homeostasis and skin dermis development by regulating ER function. Controls cell signaling pathways involved in glucose metabolism in skeletal muscle. Has a protective role against ER stress in different biological contexts. Mediates Zn(2+)-induced ferroptosis. This chain is Zinc transporter SLC39A7 (SLC39A7), found in Homo sapiens (Human).